The following is a 149-amino-acid chain: Calmodulin-2 (149 aa).

Ala2 bears the N-acetylalanine mark. EF-hand domains follow at residues 8–43 (EQIA…LGQN), 44–79 (PTEA…KMKD), 81–116 (DSEE…LGEK), and 117–149 (LTDE…MMAK). 14 residues coordinate Ca(2+): Asp21, Asp23, Asp25, Cys27, Glu32, Asp57, Asp59, Asn61, Thr63, Glu68, Asp94, Asp96, Asn98, and Glu105. Position 116 is an N6,N6,N6-trimethyllysine (Lys116). Ca(2+) is bound by residues Asp130, Asp132, Asp134, Gln136, and Glu141.

This sequence belongs to the calmodulin family.

Functionally, calmodulin mediates the control of a large number of enzymes, ion channels and other proteins by Ca(2+). Among the enzymes to be stimulated by the calmodulin-Ca(2+) complex are a number of protein kinases and phosphatases. The sequence is that of Calmodulin-2 (CAM2) from Oryza sativa subsp. indica (Rice).